The chain runs to 1575 residues: Lysophospholipase NTE1 (1575 aa).

A disordered region spans residues M1–N56. Residues M1 to G99 lie on the Cytoplasmic side of the membrane. The segment covering L19–S48 has biased composition (low complexity). Residues I100 to V120 traverse the membrane as a helical segment. At V121 to T151 the chain is on the lumenal side. Residues M152 to I172 traverse the membrane as a helical segment. Residues R173–I1575 lie on the Cytoplasmic side of the membrane. 2 disordered regions span residues D339–V425 and G568–G587. Positions R409 to S424 are enriched in basic residues. Residues G737–R856 and R894–R1014 contribute to the a nucleoside 3',5'-cyclic phosphate site. Residues L1272–K1436 enclose the PNPLA domain. Positions G1276 to G1281 match the GXGXXG motif. Positions G1303–G1307 match the GXSXG motif. S1305 serves as the catalytic Nucleophile. D1423 functions as the Proton acceptor in the catalytic mechanism. The DGA/G signature appears at D1423 to G1425.

It belongs to the NTE family.

The protein resides in the endoplasmic reticulum membrane. The enzyme catalyses a 1-acyl-sn-glycero-3-phosphocholine + H2O = sn-glycerol 3-phosphocholine + a fatty acid + H(+). With respect to regulation, inhibited by organophosphorus esters. Functionally, intracellular phospholipase B that catalyzes the double deacylation of phosphatidylcholine (PC) to glycerophosphocholine (GroPCho). Plays an important role in membrane lipid homeostasis. Responsible for the rapid PC turnover in response to inositol, elevated temperatures, or when choline is present in the growth medium. In Coccidioides immitis (strain RS) (Valley fever fungus), this protein is Lysophospholipase NTE1 (NTE1).